The primary structure comprises 241 residues: Proteasome subunit beta type-6 (241 aa).

The propeptide occupies 1-19; sequence MATIASEYSSEASNTPIEH.

The protein belongs to the peptidase T1B family. As to quaternary structure, the 26S proteasome consists of a 20S proteasome core and two 19S regulatory subunits. The 20S proteasome core is composed of 28 subunits that are arranged in four stacked rings, resulting in a barrel-shaped structure. The two end rings are each formed by seven alpha subunits, and the two central rings are each formed by seven beta subunits. The catalytic chamber with the active sites is on the inside of the barrel.

The protein resides in the cytoplasm. It is found in the nucleus. Functionally, non-catalytic component of the proteasome which degrades poly-ubiquitinated proteins in the cytoplasm and in the nucleus. It is essential for the regulated turnover of proteins and for the removal of misfolded proteins. The proteasome is a multicatalytic proteinase complex that is characterized by its ability to cleave peptides with Arg, Phe, Tyr, Leu, and Glu adjacent to the leaving group at neutral or slightly basic pH. It has an ATP-dependent proteolytic activity. The polypeptide is Proteasome subunit beta type-6 (PRE7) (Saccharomyces cerevisiae (strain ATCC 204508 / S288c) (Baker's yeast)).